A 441-amino-acid chain; its full sequence is MSKPVVAIVGRPNVGKSTLFNRLAGGLVAIVENRPGVTRDRLYRDSEWLGRKFTIIDTGGIEFVNENTSISAQMRRQAEIAIEEADVIVFVIDAQISPTPDDDMIAQTLRRSGKPVILAANKVENFAKTELYEFYNLGLGEPVPISAVHGMNIGDLLDEVVSHFPEDIEEEVDPDTIRIAVVGRPNVGKSSLVNTLLGEERVIVSNIPGTTRDAIDSAFEHEGKHYIIIDTAGMRRKGRIEELTEQYSVSRSLRAVDRSDVILMLLDAGEGVTEQDKKIAGYAHEAGKGIVLVVNKWDLIEKDDKTMNRFEKDIREELGFMQYAPTLFISAKTGQRVTKLLDLVDFVAEQNSTRVATATLNTLVREWVHLNPPPTDKGRRLKVLYATQVGVKPPTFVFFVNDHELMHFSYRRYLENQLRSSFGFEGSPIRMIVRQKDEERE.

2 consecutive EngA-type G domains span residues 4–168 and 177–352; these read PVVA…PEDI and IRIA…EQNS. GTP-binding positions include 10-17, 57-61, 121-124, 183-190, 230-234, and 295-298; these read GRPNVGKS, DTGGI, NKVE, DTAGM, and NKWD. The KH-like domain occupies 353–437; sequence TRVATATLNT…PIRMIVRQKD (85 aa).

It belongs to the TRAFAC class TrmE-Era-EngA-EngB-Septin-like GTPase superfamily. EngA (Der) GTPase family. Associates with the 50S ribosomal subunit.

Its function is as follows. GTPase that plays an essential role in the late steps of ribosome biogenesis. The polypeptide is GTPase Der (Desulfitobacterium hafniense (strain DSM 10664 / DCB-2)).